The following is a 382-amino-acid chain: Chaperone protein DnaJ (382 aa).

A J domain is found at 5-70 (DYYEVLGLQK…QKRAAYDQYG (66 aa)). The CR-type zinc finger occupies 134-212 (GTTKDIQINT…CHGEGRVHKK (79 aa)). The Zn(2+) site is built by Cys-147, Cys-150, Cys-164, Cys-167, Cys-186, Cys-189, Cys-200, and Cys-203. 4 CXXCXGXG motif repeats span residues 147 to 154 (CDSCGGSG), 164 to 171 (CPHCHGSG), 186 to 193 (CPTCHGSG), and 200 to 207 (CRNCHGEG).

It belongs to the DnaJ family. As to quaternary structure, homodimer. Zn(2+) is required as a cofactor.

The protein localises to the cytoplasm. In terms of biological role, participates actively in the response to hyperosmotic and heat shock by preventing the aggregation of stress-denatured proteins and by disaggregating proteins, also in an autonomous, DnaK-independent fashion. Unfolded proteins bind initially to DnaJ; upon interaction with the DnaJ-bound protein, DnaK hydrolyzes its bound ATP, resulting in the formation of a stable complex. GrpE releases ADP from DnaK; ATP binding to DnaK triggers the release of the substrate protein, thus completing the reaction cycle. Several rounds of ATP-dependent interactions between DnaJ, DnaK and GrpE are required for fully efficient folding. Also involved, together with DnaK and GrpE, in the DNA replication of plasmids through activation of initiation proteins. This chain is Chaperone protein DnaJ, found in Haemophilus influenzae (strain ATCC 51907 / DSM 11121 / KW20 / Rd).